An 85-amino-acid polypeptide reads, in one-letter code: Beta-insect depressant toxin Lqh-dprIT3g (85 aa).

A signal peptide spans 1 to 21 (MKLLLLLTISASMLIEGLVNA). The LCN-type CS-alpha/beta domain maps to 22–82 (DGYIRGGDGC…EWDYETDTCG (61 aa)). 4 disulfides stabilise this stretch: Cys-31–Cys-81, Cys-35–Cys-56, Cys-42–Cys-63, and Cys-46–Cys-65. Gly-82 carries the post-translational modification Glycine amide.

This sequence belongs to the long (4 C-C) scorpion toxin superfamily. Sodium channel inhibitor family. Beta subfamily. Expressed by the venom gland.

The protein localises to the secreted. Functionally, depressant insect beta-toxins cause a transient contraction paralysis followed by a slow flaccid paralysis. They bind voltage-independently at site-4 of sodium channels (Nav) and block action potentials, primarily by depolarizing the axonal membrane and suppressing the sodium current. This depressant toxin is active only on insects. It is found in a relatively small amount in the venom. The chain is Beta-insect depressant toxin Lqh-dprIT3g from Leiurus hebraeus (Hebrew deathstalker scorpion).